The chain runs to 213 residues: Orotate phosphoribosyltransferase (213 aa).

Lys26 lines the 5-phospho-alpha-D-ribose 1-diphosphate pocket. 34 to 35 (FF) serves as a coordination point for orotate. 5-phospho-alpha-D-ribose 1-diphosphate contacts are provided by residues 72 to 73 (YK), Arg99, Lys100, Lys103, His105, and 124 to 132 (DDVITAGTA). Positions 128 and 156 each coordinate orotate.

Belongs to the purine/pyrimidine phosphoribosyltransferase family. PyrE subfamily. As to quaternary structure, homodimer. The cofactor is Mg(2+).

The enzyme catalyses orotidine 5'-phosphate + diphosphate = orotate + 5-phospho-alpha-D-ribose 1-diphosphate. Its pathway is pyrimidine metabolism; UMP biosynthesis via de novo pathway; UMP from orotate: step 1/2. In terms of biological role, catalyzes the transfer of a ribosyl phosphate group from 5-phosphoribose 1-diphosphate to orotate, leading to the formation of orotidine monophosphate (OMP). The polypeptide is Orotate phosphoribosyltransferase (Escherichia coli O45:K1 (strain S88 / ExPEC)).